We begin with the raw amino-acid sequence, 874 residues long: Alanine--tRNA ligase (874 aa).

Positions 564, 568, 665, and 669 each coordinate Zn(2+).

The protein belongs to the class-II aminoacyl-tRNA synthetase family. It depends on Zn(2+) as a cofactor.

It is found in the cytoplasm. The enzyme catalyses tRNA(Ala) + L-alanine + ATP = L-alanyl-tRNA(Ala) + AMP + diphosphate. In terms of biological role, catalyzes the attachment of alanine to tRNA(Ala) in a two-step reaction: alanine is first activated by ATP to form Ala-AMP and then transferred to the acceptor end of tRNA(Ala). Also edits incorrectly charged Ser-tRNA(Ala) and Gly-tRNA(Ala) via its editing domain. The chain is Alanine--tRNA ligase from Burkholderia mallei (strain ATCC 23344).